The chain runs to 634 residues: MSISGLLLSVALLPSVVSAHDHVYFDPPSSGSPFLGPQIPLTGPPALTGTHEFTLRHIYQRGTRDQPDLHRRLDIKPHTRLWAVSDDGLEKELVTFDTPLVASSSPLTIQRLADRRLSVIEGYLAAARSSGEAVALSPSEWVMDTLAGPNVTDKESVLTFAKMTANDYIEEPGTEDWHYIHGRFNYSSSFGWQSDGLRGHIYADKTNSTIVISLKGTSPALFDGAGTTTNDKINDNLFFSCCCGQGGSYLWRQVCDCQQSAFTANLTCIVEAMNDENRYYRAAIDLYSNVTDMYPDANVWMTGHSLGGAMSSLLGLTFGLPVVTFEAVPEALPAARLGLPSPPGHDPRLPQSRQYTGAYHFGHTADPVYMGTCNGVGSICTWGGYAMESACHTGQMCVYDTVEDKGWRVALSTHRIRAVISDVLEVYEDLPPCAPEEECYDCELWKFFKSNGSESTTTSTTTTTTAPTTTRTSTCKTPGWWGCLDESTTTTTITSTTTTTTTSTSTCKTPGWFGCKDPTTTTEATPAPSVTTTIPTPTTYPTSSTSTCKDPGWFGCRDPSSTTASITSSPSTTSTCDDPGFFWGCYDESTTATHPITPGPSAPYSTPSPTNKHTCTSSIFFGLICVGSTGTELR.

Residues 1–4 (MSIS) lie on the Cytoplasmic side of the membrane. The helical; Signal-anchor for type II membrane protein transmembrane segment at 5–25 (GLLLSVALLPSVVSAHDHVYF) threads the bilayer. The Lumenal segment spans residues 26–634 (DPPSSGSPFL…CVGSTGTELR (609 aa)). N-linked (GlcNAc...) asparagine glycans are attached at residues Asn-150, Asn-185, Asn-207, Asn-265, and Asn-289. Ser-305 acts as the Charge relay system in catalysis. Residue Asn-451 is glycosylated (N-linked (GlcNAc...) asparagine). A disordered region spans residues 518 to 544 (PTTTTEATPAPSVTTTIPTPTTYPTSS).

This sequence belongs to the AB hydrolase superfamily. Lipase family. As to quaternary structure, binds to both phosphatidylinositol (PI) and phosphatidylinositol 3,5-bisphosphate (PIP2).

The protein localises to the endosome. The protein resides in the multivesicular body membrane. Its subcellular location is the prevacuolar compartment membrane. It carries out the reaction a triacylglycerol + H2O = a diacylglycerol + a fatty acid + H(+). Functionally, lipase which is essential for lysis of subvacuolar cytoplasm to vacuole targeted bodies and intravacuolar autophagic bodies. Involved in the lysis of intravacuolar multivesicular body (MVB) vesicles. The intravacuolar membrane disintegration by atg15 is critical to life span extension. The polypeptide is Putative lipase atg15 (atg15) (Neosartorya fischeri (strain ATCC 1020 / DSM 3700 / CBS 544.65 / FGSC A1164 / JCM 1740 / NRRL 181 / WB 181) (Aspergillus fischerianus)).